The primary structure comprises 98 residues: NADH-ubiquinone oxidoreductase chain 4L (98 aa).

3 helical membrane-spanning segments follow: residues 2–22 (PSIF…TLVF), 29–49 (SLLC…LIIL), and 61–81 (ILLL…LVMV).

This sequence belongs to the complex I subunit 4L family. In terms of assembly, core subunit of respiratory chain NADH dehydrogenase (Complex I) which is composed of 45 different subunits.

Its subcellular location is the mitochondrion inner membrane. The catalysed reaction is a ubiquinone + NADH + 5 H(+)(in) = a ubiquinol + NAD(+) + 4 H(+)(out). In terms of biological role, core subunit of the mitochondrial membrane respiratory chain NADH dehydrogenase (Complex I) which catalyzes electron transfer from NADH through the respiratory chain, using ubiquinone as an electron acceptor. Part of the enzyme membrane arm which is embedded in the lipid bilayer and involved in proton translocation. The sequence is that of NADH-ubiquinone oxidoreductase chain 4L (MT-ND4L) from Avahi laniger (Eastern woolly lemur).